The primary structure comprises 99 residues: MNKTEFIAFMTDHGHNHKHASHKTLTKAEAEKALNLVLDSVISAIKSHHNINITGFGSFEIHHRKAREGRNPKTGAKMKIDAYNQPTFRAGRKMKEACN.

The segment at 67–86 (REGRNPKTGAKMKIDAYNQP) is disordered.

Belongs to the bacterial histone-like protein family. Homodimer.

In terms of biological role, histone-like DNA-binding protein which is capable of wrapping DNA to stabilize it, and thus to prevent its denaturation under extreme environmental conditions. The protein is DNA-binding protein HU (hup) of Rickettsia conorii (strain ATCC VR-613 / Malish 7).